We begin with the raw amino-acid sequence, 628 residues long: 69 kDa protein (628 aa).

Disordered regions lie at residues 1-25 (MSNGLPISIGRPCTHDSQRSLSAPD), 141-332 (HFHA…FRPS), 346-404 (LGHL…LLPN), 418-493 (RGKI…DPVL), and 535-628 (QTVL…PDTD). Positions 299–312 (PPTTTSRPTGPPSR) are enriched in low complexity. Residues 320–331 (YQSSPHTPNFRP) are compositionally biased toward polar residues. Pro residues predominate over residues 434-450 (GAPPPPRRLPSPAPRPQ).

It belongs to the tymoviridae protein p69 family.

In terms of biological role, acts as a suppressor of RNA-mediated gene silencing, also known as post-transcriptional gene silencing (PTGS), a mechanism of plant viral defense that limits the accumulation of viral RNAs. The sequence is that of 69 kDa protein from Brassica (Chinese cabbage).